We begin with the raw amino-acid sequence, 777 residues long: Subtilisin-like protease SBT3.3 (777 aa).

The first 24 residues, 1–24 (MRSFRSSILLVLLSLITVLNATRA), serve as a signal peptide directing secretion. Positions 25 to 111 (RSETESKVHI…VIPDGFHELA (87 aa)) are cleaved as a propeptide — removed in mature form. An Inhibitor I9 domain is found at 32–109 (VHIVYLGEKK…VHVIPDGFHE (78 aa)). Positions 115–624 (TWEYLGLSSA…GGIVNPEKAA (510 aa)) constitute a Peptidase S8 domain. N-linked (GlcNAc...) asparagine glycosylation is present at asparagine 131. The Charge relay system role is filled by aspartate 145. The N-linked (GlcNAc...) asparagine glycan is linked to asparagine 204. The Charge relay system role is filled by histidine 220. 5 N-linked (GlcNAc...) asparagine glycosylation sites follow: asparagine 235, asparagine 397, asparagine 412, asparagine 508, and asparagine 540. The 79-residue stretch at 403–481 (VCESLNLNPN…ELGTDILSYI (79 aa)) folds into the PA domain. Serine 555 serves as the catalytic Charge relay system. Asparagine 647 carries an N-linked (GlcNAc...) asparagine glycan.

This sequence belongs to the peptidase S8 family.

It localises to the secreted. The protein localises to the extracellular space. Its subcellular location is the extracellular matrix. Its function is as follows. Serine protease that plays a role in the control of the establishment of immune priming and systemic induced resistance. The protein is Subtilisin-like protease SBT3.3 of Arabidopsis thaliana (Mouse-ear cress).